Reading from the N-terminus, the 809-residue chain is TPR repeat-containing protein TP_0920 (809 aa).

The segment at 103–125 (PGEARALPNSEQPEVPASLDSTS) is disordered. 9 TPR repeats span residues 315–348 (LREYLLAGDIACAQHLYDEAEEAFNAALVQDPHC), 383–416 (AFLSNLCGHLALAQNRHEDAAAAYQRAFRLDPHQ), 418–450 (LFALHAAQELSLLGEKEQAIQAYLHAARLFLAQ), 471–504 (TEVRSIAGKLYYATGRHRQAHTQFDALCRAGSAD), 513–550 (LLLREAQGTHEHDAPAAAACEQRARDAFQRACALAPDC), 552–582 (LYHFKYAESLFLSEKDCDEPLARALALDPDN), 583–616 (GWLHNLCAQKALREQNFDAAAQSLQRARALLPHE), 656–689 (GQAFHLLANAFYADGCYEHAAPWYDKALREEPQN), and 723–756 (AHVYTLIALVAAQLGDFPRAELTLQEACTLWPQC).

The protein is TPR repeat-containing protein TP_0920 of Treponema pallidum (strain Nichols).